We begin with the raw amino-acid sequence, 108 residues long: uncharacterized protein (108 aa).

A signal peptide spans 1–21 (MFRSLFLAAALMAFTPLAANA).

It to E.coli YaaX.

This is an uncharacterized protein from Escherichia coli O157:H7.